The following is a 438-amino-acid chain: Adenylosuccinate synthetase (438 aa).

GTP is bound by residues 13–19 (GDEGKGK) and 41–43 (GHT). Catalysis depends on Asp-14, which acts as the Proton acceptor. 2 residues coordinate Mg(2+): Asp-14 and Gly-41. Residues 14–17 (DEGK), 39–42 (NAGH), Thr-130, Arg-144, Gln-225, Thr-240, and Arg-312 contribute to the IMP site. The active-site Proton donor is His-42. 308-314 (ATTGRQR) lines the substrate pocket. Residues Arg-314, 340-342 (KLD), and 422-424 (STG) each bind GTP.

This sequence belongs to the adenylosuccinate synthetase family. In terms of assembly, homodimer. The cofactor is Mg(2+).

The protein resides in the cytoplasm. The enzyme catalyses IMP + L-aspartate + GTP = N(6)-(1,2-dicarboxyethyl)-AMP + GDP + phosphate + 2 H(+). The protein operates within purine metabolism; AMP biosynthesis via de novo pathway; AMP from IMP: step 1/2. Plays an important role in the de novo pathway of purine nucleotide biosynthesis. Catalyzes the first committed step in the biosynthesis of AMP from IMP. The sequence is that of Adenylosuccinate synthetase from Ruthia magnifica subsp. Calyptogena magnifica.